A 161-amino-acid polypeptide reads, in one-letter code: Dihydrofolate reductase (161 aa).

The 160-residue stretch at 2-161 folds into the DHFR domain; it reads KISLISAISN…YNFCFEILSR (160 aa). A substrate-binding site is contributed by 6 to 8; it reads ISA. NADP(+) is bound by residues 7–8 and 15–20; these read SA and IGHNNK. Asp28 contacts substrate. 44-47 is an NADP(+) binding site; sequence GRLT. Residue Arg59 participates in substrate binding. Residues 64–66 and 96–101 contribute to the NADP(+) site; these read ISH and IGGSKI. Thr115 contacts substrate.

The protein belongs to the dihydrofolate reductase family.

It carries out the reaction (6S)-5,6,7,8-tetrahydrofolate + NADP(+) = 7,8-dihydrofolate + NADPH + H(+). Its pathway is cofactor biosynthesis; tetrahydrofolate biosynthesis; 5,6,7,8-tetrahydrofolate from 7,8-dihydrofolate: step 1/1. Its function is as follows. Key enzyme in folate metabolism. Catalyzes an essential reaction for de novo glycine and purine synthesis, and for DNA precursor synthesis. This is Dihydrofolate reductase (folA) from Buchnera aphidicola subsp. Schizaphis graminum (strain Sg).